Here is a 425-residue protein sequence, read N- to C-terminus: Serine hydroxymethyltransferase (425 aa).

Residues leucine 124 and 128–130 (GHL) contribute to the (6S)-5,6,7,8-tetrahydrofolate site. The residue at position 233 (lysine 233) is an N6-(pyridoxal phosphate)lysine.

Belongs to the SHMT family. As to quaternary structure, homodimer. The cofactor is pyridoxal 5'-phosphate.

The protein resides in the cytoplasm. The catalysed reaction is (6R)-5,10-methylene-5,6,7,8-tetrahydrofolate + glycine + H2O = (6S)-5,6,7,8-tetrahydrofolate + L-serine. It functions in the pathway one-carbon metabolism; tetrahydrofolate interconversion. It participates in amino-acid biosynthesis; glycine biosynthesis; glycine from L-serine: step 1/1. In terms of biological role, catalyzes the reversible interconversion of serine and glycine with tetrahydrofolate (THF) serving as the one-carbon carrier. This reaction serves as the major source of one-carbon groups required for the biosynthesis of purines, thymidylate, methionine, and other important biomolecules. Also exhibits THF-independent aldolase activity toward beta-hydroxyamino acids, producing glycine and aldehydes, via a retro-aldol mechanism. The protein is Serine hydroxymethyltransferase of Clavibacter sepedonicus (Clavibacter michiganensis subsp. sepedonicus).